The sequence spans 239 residues: Norbelladine 4'-O-methyltransferase (239 aa).

S-adenosyl-L-methionine-binding positions include Val55, Glu77, 79–80, Ser85, Asp103, and Ala132; that span reads GV. Asp155 is a binding site for a divalent metal cation. Position 157 (Asp157) interacts with S-adenosyl-L-methionine. The a divalent metal cation site is built by Asp181 and Asn182.

Belongs to the class I-like SAM-binding methyltransferase superfamily. Cation-dependent O-methyltransferase family. Mg(2+) serves as cofactor. In terms of tissue distribution, highly expressed in bulbs. Detected in leaves and inflorescences.

It carries out the reaction norbelladine + S-adenosyl-L-methionine = 4'-O-methylnorbelladine + S-adenosyl-L-homocysteine + H(+). It participates in alkaloid biosynthesis. In terms of biological role, 4'-O-methyltransferase converting norbelladine to 4'-O-methylnorbelladine. 4'-O-methylnorbelladine is a precursor to all Amaryllidaceae alkaloids such as galanthamine, lycorine and haemanthamine, and including haemanthamine- and crinamine-type alkaloids, promising anticancer agents. Can use norbelladine, N-methylnorbelladine and dopamine as substrate, but not caffeic acid, vanillin, 3,4-dihydroxybenzaldehyde and tyramine. The chain is Norbelladine 4'-O-methyltransferase from Narcissus aff. pseudonarcissus MK-2014 (Daffodil).